A 258-amino-acid chain; its full sequence is Thiazole synthase (258 aa).

The active-site Schiff-base intermediate with DXP is K98. 1-deoxy-D-xylulose 5-phosphate-binding positions include G159, 185–186 (AG), and 207–208 (NT).

This sequence belongs to the ThiG family. As to quaternary structure, homotetramer. Forms heterodimers with either ThiH or ThiS.

The protein localises to the cytoplasm. It catalyses the reaction [ThiS sulfur-carrier protein]-C-terminal-Gly-aminoethanethioate + 2-iminoacetate + 1-deoxy-D-xylulose 5-phosphate = [ThiS sulfur-carrier protein]-C-terminal Gly-Gly + 2-[(2R,5Z)-2-carboxy-4-methylthiazol-5(2H)-ylidene]ethyl phosphate + 2 H2O + H(+). The protein operates within cofactor biosynthesis; thiamine diphosphate biosynthesis. Catalyzes the rearrangement of 1-deoxy-D-xylulose 5-phosphate (DXP) to produce the thiazole phosphate moiety of thiamine. Sulfur is provided by the thiocarboxylate moiety of the carrier protein ThiS. In vitro, sulfur can be provided by H(2)S. The sequence is that of Thiazole synthase from Bacillus cereus (strain ATCC 14579 / DSM 31 / CCUG 7414 / JCM 2152 / NBRC 15305 / NCIMB 9373 / NCTC 2599 / NRRL B-3711).